Here is a 132-residue protein sequence, read N- to C-terminus: Fluoride-specific ion channel FluC 3 (132 aa).

Helical transmembrane passes span Ile-4–Trp-24, Phe-32–Tyr-52, Ile-66–Ser-86, and Leu-95–Leu-115. Na(+) contacts are provided by Gly-74 and Thr-77.

This sequence belongs to the fluoride channel Fluc/FEX (TC 1.A.43) family.

The protein resides in the cell membrane. The enzyme catalyses fluoride(in) = fluoride(out). With respect to regulation, na(+) is not transported, but it plays an essential structural role and its presence is essential for fluoride channel function. Its function is as follows. Fluoride-specific ion channel. Important for reducing fluoride concentration in the cell, thus reducing its toxicity. The polypeptide is Fluoride-specific ion channel FluC 3 (Methanosarcina barkeri (strain Fusaro / DSM 804)).